Here is a 121-residue protein sequence, read N- to C-terminus: Small ribosomal subunit protein uS13 (121 aa).

Residues 97-121 (VRGQRTRTNARTRRGARKTVAGKKK) form a disordered region. A compositionally biased stretch (basic residues) spans 100–121 (QRTRTNARTRRGARKTVAGKKK).

The protein belongs to the universal ribosomal protein uS13 family. In terms of assembly, part of the 30S ribosomal subunit. Forms a loose heterodimer with protein S19. Forms two bridges to the 50S subunit in the 70S ribosome.

Located at the top of the head of the 30S subunit, it contacts several helices of the 16S rRNA. In the 70S ribosome it contacts the 23S rRNA (bridge B1a) and protein L5 of the 50S subunit (bridge B1b), connecting the 2 subunits; these bridges are implicated in subunit movement. Contacts the tRNAs in the A and P-sites. The chain is Small ribosomal subunit protein uS13 from Parasynechococcus marenigrum (strain WH8102).